Reading from the N-terminus, the 698-residue chain is Polyribonucleotide nucleotidyltransferase (698 aa).

Residues D485 and D491 each contribute to the Mg(2+) site. Residues 552 to 611 enclose the KH domain; sequence PRITTIKINPEKIRDVIGKGGAVIRALTEETGTTIELDDDGTVKIASSNGEATKEAIRRI. Positions 621 to 689 constitute an S1 motif domain; that stretch reads GRVYNGKVIR…RQGRVRLSIK (69 aa).

This sequence belongs to the polyribonucleotide nucleotidyltransferase family. As to quaternary structure, component of the RNA degradosome, which is a multiprotein complex involved in RNA processing and mRNA degradation. It depends on Mg(2+) as a cofactor.

It is found in the cytoplasm. The catalysed reaction is RNA(n+1) + phosphate = RNA(n) + a ribonucleoside 5'-diphosphate. Involved in mRNA degradation. Catalyzes the phosphorolysis of single-stranded polyribonucleotides processively in the 3'- to 5'-direction. In Shewanella denitrificans (strain OS217 / ATCC BAA-1090 / DSM 15013), this protein is Polyribonucleotide nucleotidyltransferase.